The chain runs to 539 residues: Chloride channel CLIC-like protein 1 (539 aa).

The N-terminal stretch at Met-1 to Ala-18 is a signal peptide. Over His-19–Asn-184 the chain is Lumenal. The disordered stretch occupies residues Lys-41–Ala-61. The helical transmembrane segment at Val-185 to Thr-205 threads the bilayer. Residues Tyr-206–Arg-215 are Cytoplasmic-facing. Residues Ile-216 to Ala-236 form a helical membrane-spanning segment. At Phe-237–Glu-329 the chain is on the lumenal side. A helical transmembrane segment spans residues Ile-330–Cys-350. Topologically, residues Tyr-351 to Gly-539 are cytoplasmic. A disordered region spans residues Arg-361 to Gly-410. A compositionally biased stretch (basic and acidic residues) spans Gly-364 to Leu-389. 3 positions are modified to phosphoserine: Ser-429, Ser-433, and Ser-459. The interval Asp-444 to Gly-539 is disordered. The span at Ser-475–Lys-485 shows a compositional bias: polar residues. Thr-476 carries the post-translational modification Phosphothreonine. Phosphoserine occurs at positions 498, 513, and 521. Positions Cys-512–Ser-521 are enriched in low complexity.

This sequence belongs to the chloride channel MCLC family. Homomultimers. Interacts with mitochondrial protein PIGBOS1 (via C-terminus); the interaction occurs at the mitochondria-associated endoplasmic reticulum (ER) membrane, a zone of contact between the ER and mitochondrial membranes, but does not appear to play a role in ER-mitochondria tethering and is not affected by ER stress. Interacts with CALR. As to expression, expressed in cerebellum (at protein level).

It localises to the endoplasmic reticulum membrane. The catalysed reaction is chloride(in) = chloride(out). The enzyme catalyses bromide(in) = bromide(out). It catalyses the reaction nitrate(in) = nitrate(out). It carries out the reaction fluoride(in) = fluoride(out). Its activity is regulated as follows. Activated by membrane phosphatidylinositol 4,5-bisphosphate (PI(4,5)P2, PIP2). Inhibited by lumenal Ca(2+). Its function is as follows. Anion-selective channel with Ca(2+)-dependent and voltage-independent gating. Permeable to small monovalent anions with selectivity for bromide &gt; chloride &gt; nitrate &gt; fluoride. Operates in the endoplasmic reticulum (ER) membrane where it mediates chloride efflux to compensate for the loss of positive charges from the ER lumen upon Ca(2+) release. Contributes to the maintenance of ER Ca(2+) pools and activation of unfolded protein response to prevent accumulation of misfolded proteins in the ER lumen. Particularly involved in ER homeostasis mechanisms underlying motor neurons and retinal photoreceptors survival. In Mus musculus (Mouse), this protein is Chloride channel CLIC-like protein 1.